We begin with the raw amino-acid sequence, 601 residues long: uncharacterized protein (601 aa).

The next 3 helical transmembrane spans lie at 74–94, 104–124, and 531–551; these read IFFF…VFSI, VSFL…PNDG, and LVLL…NYYY.

Its subcellular location is the endoplasmic reticulum membrane. This is an uncharacterized protein from Schizosaccharomyces pombe (strain 972 / ATCC 24843) (Fission yeast).